The chain runs to 233 residues: Small ribosomal subunit protein uS2c (233 aa).

It belongs to the universal ribosomal protein uS2 family.

It is found in the plastid. It localises to the cyanelle. This Cyanophora paradoxa protein is Small ribosomal subunit protein uS2c (rps2).